Here is a 309-residue protein sequence, read N- to C-terminus: Foldase protein PrsA 2 (309 aa).

The signal sequence occupies residues 1–22 (MKQMNKLITGVVTLATVVTLSA). The N-palmitoyl cysteine moiety is linked to residue C23. A lipid anchor (S-diacylglycerol cysteine) is attached at C23. The region spanning 146-241 (TPTMTAEIMQ…RTYHIIKVTK (96 aa)) is the PpiC domain.

This sequence belongs to the PrsA family.

It is found in the cell membrane. The catalysed reaction is [protein]-peptidylproline (omega=180) = [protein]-peptidylproline (omega=0). Functionally, plays a major role in protein secretion by helping the post-translocational extracellular folding of several secreted proteins. The protein is Foldase protein PrsA 2 (prsA2) of Streptococcus pyogenes serotype M3 (strain ATCC BAA-595 / MGAS315).